The sequence spans 280 residues: Succinate dehydrogenase [ubiquinone] iron-sulfur subunit, mitochondrial (280 aa).

The transit peptide at 1-28 directs the protein to the mitochondrion; the sequence is MAAVVALSLRRRLPATTLGGACLQASRG. The 2Fe-2S ferredoxin-type domain occupies 40–133; it reads KKFAIYRWDP…VSKIYPLPHM (94 aa). K51 and K55 each carry N6-acetyllysine. Positions 93, 98, 101, and 113 each coordinate [2Fe-2S] cluster. The segment at 146 to 218 is interaction with SDHAF1; it reads FYAQYKSIEP…PAVLMQAYRW (73 aa). One can recognise a 4Fe-4S ferredoxin-type domain in the interval 176–206; sequence EREKLDGLYECILCACCSTSCPSYWWNGDKY. [4Fe-4S] cluster-binding residues include C186, C189, and C192. C196 lines the [3Fe-4S] cluster pocket. W201 provides a ligand contact to a ubiquinone. The [3Fe-4S] cluster site is built by C243 and C249. C253 provides a ligand contact to [4Fe-4S] cluster.

This sequence belongs to the succinate dehydrogenase/fumarate reductase iron-sulfur protein family. As to quaternary structure, component of complex II composed of four subunits: the flavoprotein (FP) SDHA, iron-sulfur protein (IP) SDHB, and a cytochrome b560 composed of SDHC and SDHD. Interacts with SDHAF1; the interaction is required for iron-sulfur cluster incorporation into SDHB. In terms of assembly, (Microbial infection) Interacts with JC virus small t antigen. The cofactor is [2Fe-2S] cluster. It depends on [3Fe-4S] cluster as a cofactor. [4Fe-4S] cluster is required as a cofactor.

Its subcellular location is the mitochondrion inner membrane. The catalysed reaction is a quinone + succinate = fumarate + a quinol. The enzyme catalyses (R)-malate + a quinone = enol-oxaloacetate + a quinol. It catalyses the reaction (S)-malate + a quinone = enol-oxaloacetate + a quinol. It participates in carbohydrate metabolism; tricarboxylic acid cycle; fumarate from succinate (eukaryal route): step 1/1. Its activity is regulated as follows. Enol-oxaloacetate inhibits the succinate dehydrogenase activity. Functionally, iron-sulfur protein (IP) subunit of the succinate dehydrogenase complex (mitochondrial respiratory chain complex II), responsible for transferring electrons from succinate to ubiquinone (coenzyme Q). SDH also oxidizes malate to the non-canonical enol form of oxaloacetate, enol-oxaloacetate. Enol-oxaloacetate, which is a potent inhibitor of the succinate dehydrogenase activity, is further isomerized into keto-oxaloacetate. The chain is Succinate dehydrogenase [ubiquinone] iron-sulfur subunit, mitochondrial (SDHB) from Homo sapiens (Human).